The sequence spans 638 residues: 9-cis-epoxycarotenoid dioxygenase NCED1, chloroplastic (638 aa).

A chloroplast-targeting transit peptide spans 1 to 80; sequence MQRICPAHCS…QTEQEDEQLV (80 aa). Composition is skewed to low complexity over residues 28-37, 44-69, and 92-102; these read AASAAPQSPS, ASAAPPSAAASTTVLTSPLVTTTRTP, and TTNGRAAPSQS. Disordered regions lie at residues 28 to 80 and 92 to 113; these read AASA…EQLV and TTNGRAAPSQSRPRRRPAPAAA. Fe cation is bound by residues His-331, His-380, His-446, and His-624.

It belongs to the carotenoid oxygenase family. Requires Fe(2+) as cofactor.

The protein resides in the plastid. Its subcellular location is the chloroplast. The enzyme catalyses a 9-cis-epoxycarotenoid + O2 = a 12'-apo-carotenal + 2-cis,4-trans-xanthoxin. It carries out the reaction 9-cis-violaxanthin + O2 = (3S,5R,6S)-5,6-epoxy-3-hydroxy-5,6-dihydro-12'-apo-beta-caroten-12'-al + 2-cis,4-trans-xanthoxin. The catalysed reaction is 9'-cis-neoxanthin + O2 = (3S,5R,6R)-3,5-dihydroxy-6,7-didehydro-5,6-dihydro-12'-apo-beta-caroten-12'-al + 2-cis,4-trans-xanthoxin. Has a 11,12(11',12') 9-cis epoxycarotenoid cleavage activity. Catalyzes the first step of abscisic-acid biosynthesis from carotenoids. The protein is 9-cis-epoxycarotenoid dioxygenase NCED1, chloroplastic of Oryza sativa subsp. japonica (Rice).